Reading from the N-terminus, the 310-residue chain is p-hydroxybenzoic acid efflux pump subunit AaeA (310 aa).

Residues 12-32 (AITVVLVILAFIAIFNAWVYY) traverse the membrane as a helical segment.

It belongs to the membrane fusion protein (MFP) (TC 8.A.1) family.

It localises to the cell inner membrane. Functionally, forms an efflux pump with AaeB. This chain is p-hydroxybenzoic acid efflux pump subunit AaeA, found in Escherichia coli O17:K52:H18 (strain UMN026 / ExPEC).